The primary structure comprises 280 residues: Intimin (280 aa).

One can recognise a Big-1 domain in the interval 1-92 (ITEIKADKTT…MLKLLEVEFF (92 aa)). Residues 127-173 (ANGGNGKYTWYSANPAIASVDPSSGQVTLKDKGETTITVVSGDKQTA) form the BIG2 domain. Cys-201 and Cys-278 are disulfide-bonded.

The protein belongs to the intimin/invasin family.

The protein localises to the cell outer membrane. In terms of biological role, an inverse autotransporter. This is Intimin (eaeA) from Hafnia alvei.